The following is a 712-amino-acid chain: Ribosomal RNA large subunit methyltransferase K/L (712 aa).

One can recognise a THUMP domain in the interval 46–157 (GAYQALLHSR…RENMVVSLDL (112 aa)).

This sequence belongs to the methyltransferase superfamily. RlmKL family.

The protein resides in the cytoplasm. The catalysed reaction is guanosine(2445) in 23S rRNA + S-adenosyl-L-methionine = N(2)-methylguanosine(2445) in 23S rRNA + S-adenosyl-L-homocysteine + H(+). The enzyme catalyses guanosine(2069) in 23S rRNA + S-adenosyl-L-methionine = N(2)-methylguanosine(2069) in 23S rRNA + S-adenosyl-L-homocysteine + H(+). Its function is as follows. Specifically methylates the guanine in position 2445 (m2G2445) and the guanine in position 2069 (m7G2069) of 23S rRNA. The protein is Ribosomal RNA large subunit methyltransferase K/L of Actinobacillus pleuropneumoniae serotype 5b (strain L20).